The sequence spans 800 residues: Ion-translocating oxidoreductase complex subunit C (800 aa).

4Fe-4S ferredoxin-type domains are found at residues 367–398 (DEFS…QQLY) and 408–437 (KARG…VQYY). [4Fe-4S] cluster is bound by residues Cys-378, Cys-381, Cys-384, Cys-388, Cys-417, Cys-420, Cys-423, and Cys-427. Low complexity-rich tracts occupy residues 536-553 (GATP…APAP), 571-583 (AKQA…PAAT), 599-617 (AAIA…APAA), 647-667 (AKQA…ADPA), and 675-690 (AAIA…KQAA). Disordered regions lie at residues 536–558 (GATP…DDPR), 571–631 (AKQA…QDDP), and 647–706 (AKQA…ENTD). The segment covering 693–705 (HATTEPVTVQENT) has biased composition (polar residues).

The protein belongs to the 4Fe4S bacterial-type ferredoxin family. RnfC subfamily. The complex is composed of six subunits: RnfA, RnfB, RnfC, RnfD, RnfE and RnfG. [4Fe-4S] cluster is required as a cofactor.

Its subcellular location is the cell inner membrane. In terms of biological role, part of a membrane-bound complex that couples electron transfer with translocation of ions across the membrane. The polypeptide is Ion-translocating oxidoreductase complex subunit C (Edwardsiella ictaluri (strain 93-146)).